The sequence spans 620 residues: Translation initiation factor IF-2 (620 aa).

Positions 119-288 (ERPPIVTIMG…IILISELENL (170 aa)) constitute a tr-type G domain. The segment at 128 to 135 (GHVDHGKT) is G1. A GTP-binding site is contributed by 128-135 (GHVDHGKT). The interval 153 to 157 (GITQA) is G2. The segment at 175–178 (DTPG) is G3. Residues 175 to 179 (DTPGH) and 229 to 232 (NKID) each bind GTP. The interval 229–232 (NKID) is G4. Positions 265 to 267 (SAI) are G5.

This sequence belongs to the TRAFAC class translation factor GTPase superfamily. Classic translation factor GTPase family. IF-2 subfamily.

Its subcellular location is the cytoplasm. Its function is as follows. One of the essential components for the initiation of protein synthesis. Protects formylmethionyl-tRNA from spontaneous hydrolysis and promotes its binding to the 30S ribosomal subunits. Also involved in the hydrolysis of GTP during the formation of the 70S ribosomal complex. This chain is Translation initiation factor IF-2, found in Mycoplasma mycoides subsp. mycoides SC (strain CCUG 32753 / NCTC 10114 / PG1).